A 610-amino-acid polypeptide reads, in one-letter code: Pentatricopeptide repeat-containing protein At5g40400 (610 aa).

12 PPR repeats span residues 165-199 (DPVV…GFSV), 200-234 (SVVT…GIHP), 235-269 (NTYT…GFEP), 270-304 (DLVT…RVVP), 305-339 (DLVT…GIKP), 340-374 (DCMS…SVVP), 375-409 (DRFT…KVDI), 410-445 (PFEV…GHEA), 446-480 (KPET…NQVL), 481-515 (DAKT…EVKP), 516-546 (DSFI…FAME), and 551-586 (DPES…GFVP).

The protein belongs to the PPR family. P subfamily.

The protein is Pentatricopeptide repeat-containing protein At5g40400 of Arabidopsis thaliana (Mouse-ear cress).